The following is a 259-amino-acid chain: Thiazole synthase (259 aa).

Residue lysine 95 is the Schiff-base intermediate with DXP of the active site. 1-deoxy-D-xylulose 5-phosphate-binding positions include glycine 156, 182-183 (AG), and 204-205 (AS).

This sequence belongs to the ThiG family. As to quaternary structure, homotetramer. Forms heterodimers with either ThiH or ThiS.

Its subcellular location is the cytoplasm. It carries out the reaction [ThiS sulfur-carrier protein]-C-terminal-Gly-aminoethanethioate + 2-iminoacetate + 1-deoxy-D-xylulose 5-phosphate = [ThiS sulfur-carrier protein]-C-terminal Gly-Gly + 2-[(2R,5Z)-2-carboxy-4-methylthiazol-5(2H)-ylidene]ethyl phosphate + 2 H2O + H(+). Its pathway is cofactor biosynthesis; thiamine diphosphate biosynthesis. Catalyzes the rearrangement of 1-deoxy-D-xylulose 5-phosphate (DXP) to produce the thiazole phosphate moiety of thiamine. Sulfur is provided by the thiocarboxylate moiety of the carrier protein ThiS. In vitro, sulfur can be provided by H(2)S. This is Thiazole synthase from Corynebacterium aurimucosum (strain ATCC 700975 / DSM 44827 / CIP 107346 / CN-1) (Corynebacterium nigricans).